A 649-amino-acid polypeptide reads, in one-letter code: Extracellular metalloproteinase 4 (649 aa).

Positions 1–18 are cleaved as a signal peptide; sequence MHGLLLAGLLALPSNVLG. Positions 19–260 are excised as a propeptide; it reads HPAEPPNSVN…VHGVVDYVAS (242 aa). Residue histidine 443 coordinates Zn(2+). Glutamate 444 is a catalytic residue. Histidine 447 contributes to the Zn(2+) binding site. N-linked (GlcNAc...) asparagine glycosylation is found at asparagine 494 and asparagine 609.

Belongs to the peptidase M36 family. Zn(2+) serves as cofactor.

It localises to the secreted. Functionally, secreted metalloproteinase probably acting as a virulence factor. The sequence is that of Extracellular metalloproteinase 4 (MEP4) from Arthroderma otae (strain ATCC MYA-4605 / CBS 113480) (Microsporum canis).